A 600-amino-acid polypeptide reads, in one-letter code: Pyranose dehydrogenase (600 aa).

Positions 1–25 (MFPRVVRLNSRLVSFALLGLQIANG) are cleaved as a signal peptide. 2 N-linked (GlcNAc...) asparagine glycosylation sites follow: asparagine 99 and asparagine 114. Histidine 127 carries the tele-8alpha-FAD histidine modification. N-linked (GlcNAc...) asparagine glycans are attached at residues asparagine 199, asparagine 275, asparagine 342, asparagine 399, and asparagine 507. The active-site Proton acceptor is the histidine 535. Residue asparagine 546 is glycosylated (N-linked (GlcNAc...) asparagine). Residue histidine 579 is part of the active site.

This sequence belongs to the GMC oxidoreductase family. Monomer. The cofactor is FAD. N-glycosylated.

It localises to the secreted. It catalyses the reaction pyranose + acceptor = pyranos-2-ulose + reduced acceptor.. The enzyme catalyses pyranose + acceptor = pyranos-3-ulose + reduced acceptor.. The catalysed reaction is pyranose + acceptor = pyranos-2,3-diulose + reduced acceptor.. It carries out the reaction a pyranoside + acceptor = a pyranosid-3-ulose + reduced acceptor.. It catalyses the reaction a pyranoside + acceptor = a pyranosid-3,4-diulose + reduced acceptor.. Catalyzes the single-oxidation or sequential double oxidation reaction of carbohydrates primarily at carbon-2 and/or carbon-3 with the concomitant reduction of the flavin. The enzyme exhibits a broad sugar substrate specificity, oxidizing different aldopyranoses to the corresponding C-1, C-2, C-3 or C-1,2, C-2,3 and C-3,4 (di)dehydro sugars with substrate-specific regioselectivity. Accepts only a narrow range of electron acceptors such as substituted benzoquinones and complexed metal ions and reacts extremely slowly with O(2) as acceptor. May play a role in the natural recycling of plant matter by oxidizing all major monosaccharides in lignocellulose and by reducing quinone compounds or reactive radical species generated during lignin depolymerization. This Agaricus xanthodermus (Poison yellow meadow mushroom) protein is Pyranose dehydrogenase.